Reading from the N-terminus, the 505-residue chain is Probable glycine dehydrogenase (decarboxylating) subunit 2 (505 aa).

At lysine 274 the chain carries N6-(pyridoxal phosphate)lysine.

It belongs to the GcvP family. C-terminal subunit subfamily. As to quaternary structure, the glycine cleavage system is composed of four proteins: P, T, L and H. In this organism, the P 'protein' is a heterodimer of two subunits. Pyridoxal 5'-phosphate is required as a cofactor.

The catalysed reaction is N(6)-[(R)-lipoyl]-L-lysyl-[glycine-cleavage complex H protein] + glycine + H(+) = N(6)-[(R)-S(8)-aminomethyldihydrolipoyl]-L-lysyl-[glycine-cleavage complex H protein] + CO2. Its function is as follows. The glycine cleavage system catalyzes the degradation of glycine. The P protein binds the alpha-amino group of glycine through its pyridoxal phosphate cofactor; CO(2) is released and the remaining methylamine moiety is then transferred to the lipoamide cofactor of the H protein. In Sulfurisphaera tokodaii (strain DSM 16993 / JCM 10545 / NBRC 100140 / 7) (Sulfolobus tokodaii), this protein is Probable glycine dehydrogenase (decarboxylating) subunit 2.